We begin with the raw amino-acid sequence, 367 residues long: NADH-quinone oxidoreductase subunit H (367 aa).

8 consecutive transmembrane segments (helical) span residues 19–39, 87–107, 132–152, 178–198, 204–224, 266–286, 291–311, and 328–348; these read ALFI…AYLV, ICFL…WAVI, IGVL…IIAG, IGLT…GEIV, MPYW…ISAL, ILIN…PLNI, IIPG…CFIW, and GWKV…SILV.

Belongs to the complex I subunit 1 family. In terms of assembly, NDH-1 is composed of 14 different subunits. Subunits NuoA, H, J, K, L, M, N constitute the membrane sector of the complex.

The protein localises to the cell inner membrane. The catalysed reaction is a quinone + NADH + 5 H(+)(in) = a quinol + NAD(+) + 4 H(+)(out). NDH-1 shuttles electrons from NADH, via FMN and iron-sulfur (Fe-S) centers, to quinones in the respiratory chain. The immediate electron acceptor for the enzyme in this species is believed to be ubiquinone. Couples the redox reaction to proton translocation (for every two electrons transferred, four hydrogen ions are translocated across the cytoplasmic membrane), and thus conserves the redox energy in a proton gradient. This subunit may bind ubiquinone. The chain is NADH-quinone oxidoreductase subunit H from Ehrlichia chaffeensis (strain ATCC CRL-10679 / Arkansas).